A 77-amino-acid polypeptide reads, in one-letter code: Large ribosomal subunit protein uL24c (77 aa).

The protein belongs to the universal ribosomal protein uL24 family. As to quaternary structure, part of the 50S ribosomal subunit.

Its subcellular location is the plastid. The protein resides in the chloroplast. One of two assembly initiator proteins, it binds directly to the 5'-end of the 23S rRNA, where it nucleates assembly of the 50S subunit. The polypeptide is Large ribosomal subunit protein uL24c (rpl24) (Thalassiosira pseudonana (Marine diatom)).